We begin with the raw amino-acid sequence, 312 residues long: Phosphatidate cytidylyltransferase (312 aa).

The segment at 1–31 (MASTDPGTGTPLDESVPGIKRAMRQSTKNTP) is disordered. A run of 8 helical transmembrane segments spans residues 37–57 (LPAA…TLVF), 58–78 (APRI…HEVV), 85–105 (GYVI…WLTW), 110–130 (VGAL…RLVM), 157–177 (ATVF…LLVY), 186–206 (FCLM…GVLF), 223–243 (GFAG…TFLA), and 247–267 (PWVG…GDLV).

It belongs to the CDS family.

Its subcellular location is the cell membrane. It carries out the reaction a 1,2-diacyl-sn-glycero-3-phosphate + CTP + H(+) = a CDP-1,2-diacyl-sn-glycerol + diphosphate. It functions in the pathway phospholipid metabolism; CDP-diacylglycerol biosynthesis; CDP-diacylglycerol from sn-glycerol 3-phosphate: step 3/3. This Mycobacterium leprae (strain TN) protein is Phosphatidate cytidylyltransferase (cdsA).